The sequence spans 308 residues: Ribonuclease 3 (308 aa).

Residues Y20–G145 enclose the RNase III domain. E62 serves as a coordination point for Mg(2+). The active site involves D66. Residues N131 and E134 each contribute to the Mg(2+) site. Residue E134 is part of the active site. The DRBM domain occupies N173–N242. A disordered region spans residues Q261 to L281.

The protein belongs to the ribonuclease III family. In terms of assembly, homodimer. The cofactor is Mg(2+).

It localises to the cytoplasm. It carries out the reaction Endonucleolytic cleavage to 5'-phosphomonoester.. Digests double-stranded RNA. Involved in the processing of primary rRNA transcript to yield the immediate precursors to the large and small rRNAs (23S and 16S). Processes some mRNAs, and tRNAs when they are encoded in the rRNA operon. Processes pre-crRNA and tracrRNA of type II CRISPR loci if present in the organism. In Phocaeicola vulgatus (strain ATCC 8482 / DSM 1447 / JCM 5826 / CCUG 4940 / NBRC 14291 / NCTC 11154) (Bacteroides vulgatus), this protein is Ribonuclease 3.